A 342-amino-acid chain; its full sequence is N-acetyl-gamma-glutamyl-phosphate reductase (342 aa).

Residue Cys-147 is part of the active site.

Belongs to the NAGSA dehydrogenase family. Type 1 subfamily.

It localises to the cytoplasm. It carries out the reaction N-acetyl-L-glutamate 5-semialdehyde + phosphate + NADP(+) = N-acetyl-L-glutamyl 5-phosphate + NADPH + H(+). Its pathway is amino-acid biosynthesis; L-arginine biosynthesis; N(2)-acetyl-L-ornithine from L-glutamate: step 3/4. Catalyzes the NADPH-dependent reduction of N-acetyl-5-glutamyl phosphate to yield N-acetyl-L-glutamate 5-semialdehyde. The protein is N-acetyl-gamma-glutamyl-phosphate reductase of Campylobacter jejuni (strain RM1221).